A 340-amino-acid chain; its full sequence is Ornithine carbamoyltransferase (340 aa).

Residues 57 to 60 (STRT), Q84, R108, and 135 to 138 (HPTQ) contribute to the carbamoyl phosphate site. Residues N167, D231, and 235-236 (SM) contribute to the L-ornithine site. Carbamoyl phosphate contacts are provided by residues 272-273 (CL) and R317.

It belongs to the aspartate/ornithine carbamoyltransferase superfamily. OTCase family.

It is found in the cytoplasm. The catalysed reaction is carbamoyl phosphate + L-ornithine = L-citrulline + phosphate + H(+). Its pathway is amino-acid biosynthesis; L-arginine biosynthesis; L-arginine from L-ornithine and carbamoyl phosphate: step 1/3. Its function is as follows. Reversibly catalyzes the transfer of the carbamoyl group from carbamoyl phosphate (CP) to the N(epsilon) atom of ornithine (ORN) to produce L-citrulline. The polypeptide is Ornithine carbamoyltransferase (argF) (Lactiplantibacillus plantarum (strain ATCC BAA-793 / NCIMB 8826 / WCFS1) (Lactobacillus plantarum)).